A 118-amino-acid polypeptide reads, in one-letter code: Small ribosomal subunit protein uS13 (118 aa).

The interval 94–118 (SLPLRGQRTKTNARTRKGPRKPIRK) is disordered.

It belongs to the universal ribosomal protein uS13 family. Part of the 30S ribosomal subunit. Forms a loose heterodimer with protein S19. Forms two bridges to the 50S subunit in the 70S ribosome.

Its function is as follows. Located at the top of the head of the 30S subunit, it contacts several helices of the 16S rRNA. In the 70S ribosome it contacts the 23S rRNA (bridge B1a) and protein L5 of the 50S subunit (bridge B1b), connecting the 2 subunits; these bridges are implicated in subunit movement. Contacts the tRNAs in the A and P-sites. The protein is Small ribosomal subunit protein uS13 of Shewanella denitrificans (strain OS217 / ATCC BAA-1090 / DSM 15013).